The primary structure comprises 180 residues: CD-NTase/cGAS isopeptidase (180 aa).

The region spanning 33-165 is the MPN domain; that stretch reads IVISSSTIEQ…AGSYSLSASV (133 aa). Residue Glu54 is the Proton donor/acceptor of the active site. Zn(2+) is bound by residues His115, His117, and Asp128.

The protein belongs to the peptidase M67B family. Cap3 isopeptidase subfamily.

Its function is as follows. Metalloprotease priming reversal component of a CBASS antivirus system. CBASS (cyclic oligonucleotide-based antiphage signaling system) provides immunity against bacteriophages. The CD-NTase protein (CdnD) synthesizes cyclic nucleotides in response to infection; these serve as specific second messenger signals. The signals activate a diverse range of effectors, leading to bacterial cell death and thus abortive phage infection. A type II-C(AAG) CBASS system. Functionally, reverses the primed state of DncV, the CD-NTase. Cleaves a CdnD-GFP (green fluorescent protein) fusion protein precisely at the C-terminus of CdnD. Overexpression decreases the efficacy of CBASS protection against phage T2. Antagonism of phage defense upon overexpression is CBASS-system specific, Cap3 from this bacteria only antagonizes its cognate CBASS system and not that of C.freundii, E.coli or V.cholerae. Protects E.coli against phage T2 infection. When the cdnD-cap2-cap3-cap4 operon is introduced in E.coli there is a more than 10(3) decrease in the efficiency of T2 plaque formation. The operon does not protect against phage T5 and only about 10-fold against T7. This Enterobacter hormaechei subsp. hoffmannii (strain UCI 50) protein is CD-NTase/cGAS isopeptidase.